Here is a 375-residue protein sequence, read N- to C-terminus: Thioredoxin reductase 1, mitochondrial (375 aa).

The N-terminal 37 residues, 1 to 37 (MNCVSRLKCLISKARSFARLGGESTLSQPPSLASAAF), are a transit peptide targeting the mitochondrion. FAD is bound by residues 58 to 61 (SGPA), 79 to 80 (FE), 87 to 92 (IAPGGQ), Asn-101, Val-134, Cys-192, Asp-337, and 344 to 346 (RQA). Cys-189 and Cys-192 are disulfide-bonded.

The protein belongs to the class-II pyridine nucleotide-disulfide oxidoreductase family. Homodimer. FAD is required as a cofactor. As to expression, ubiquitous.

The protein localises to the cytoplasm. It localises to the mitochondrion. The enzyme catalyses [thioredoxin]-dithiol + NADP(+) = [thioredoxin]-disulfide + NADPH + H(+). Its function is as follows. NADPH-dependent thioredoxin-disulfide reductase that reduces thioredoxins O1, O2 and F3. The sequence is that of Thioredoxin reductase 1, mitochondrial (NTR1) from Arabidopsis thaliana (Mouse-ear cress).